The following is a 501-amino-acid chain: Cytochrome P450 4d2 (501 aa).

2 residues coordinate heme: Glu311 and Cys449.

It belongs to the cytochrome P450 family. The cofactor is heme.

The protein localises to the endoplasmic reticulum membrane. Its subcellular location is the microsome membrane. Its function is as follows. Involved in the metabolism of insect hormones and in the breakdown of synthetic insecticides. In Drosophila melanogaster (Fruit fly), this protein is Cytochrome P450 4d2 (Cyp4d2).